Consider the following 145-residue polypeptide: Transcriptional regulator MraZ (145 aa).

2 SpoVT-AbrB domains span residues 5 to 50 (TFNH…ALPQ) and 81 to 124 (AHEV…DRAA).

This sequence belongs to the MraZ family. As to quaternary structure, forms oligomers.

It is found in the cytoplasm. The protein resides in the nucleoid. This is Transcriptional regulator MraZ from Anaeromyxobacter dehalogenans (strain 2CP-1 / ATCC BAA-258).